Reading from the N-terminus, the 397-residue chain is Major outer membrane porin, serovar L3 (397 aa).

An N-terminal signal peptide occupies residues 1–22 (MKKLLKSVLVFAALSSASSLQA).

This sequence belongs to the chlamydial porin (CP) (TC 1.B.2) family. In terms of assembly, part of a disulfide cross-linked outer membrane complex (COMC) composed of the major outer membrane porin (MOMP), the small cysteine-rich protein (OmcA) and the large cysteine-rich periplasmic protein (OmcB).

It is found in the cell outer membrane. Its function is as follows. In elementary bodies (EBs, the infectious stage, which is able to survive outside the host cell) provides the structural integrity of the outer envelope through disulfide cross-links with the small cysteine-rich protein and the large cysteine-rich periplasmic protein. It has been described in publications as the Sarkosyl-insoluble COMC (Chlamydia outer membrane complex), and serves as the functional equivalent of peptidoglycan. In terms of biological role, permits diffusion of specific solutes through the outer membrane. This chain is Major outer membrane porin, serovar L3 (ompA), found in Chlamydia trachomatis.